We begin with the raw amino-acid sequence, 268 residues long: tRNA pseudouridine synthase A (268 aa).

Catalysis depends on D52, which acts as the Nucleophile. Y113 contacts substrate.

It belongs to the tRNA pseudouridine synthase TruA family. In terms of assembly, homodimer.

It carries out the reaction uridine(38/39/40) in tRNA = pseudouridine(38/39/40) in tRNA. Formation of pseudouridine at positions 38, 39 and 40 in the anticodon stem and loop of transfer RNAs. This Rhizobium leguminosarum bv. trifolii (strain WSM2304) protein is tRNA pseudouridine synthase A.